We begin with the raw amino-acid sequence, 68 residues long: DNA-directed RNA polymerase subunit omega (68 aa).

It belongs to the RNA polymerase subunit omega family. As to quaternary structure, the RNAP catalytic core consists of 2 alpha, 1 beta, 1 beta' and 1 omega subunit. When a sigma factor is associated with the core the holoenzyme is formed, which can initiate transcription.

It catalyses the reaction RNA(n) + a ribonucleoside 5'-triphosphate = RNA(n+1) + diphosphate. In terms of biological role, promotes RNA polymerase assembly. Latches the N- and C-terminal regions of the beta' subunit thereby facilitating its interaction with the beta and alpha subunits. This is DNA-directed RNA polymerase subunit omega from Desulfitobacterium hafniense (strain DSM 10664 / DCB-2).